A 298-amino-acid polypeptide reads, in one-letter code: Interferon-inducible double-stranded RNA-dependent protein kinase activator A homolog B (298 aa).

3 consecutive DRBM domains span residues 20-87 (TPIQ…ILRG), 112-180 (NPVG…KFKT), and 225-293 (DYVK…YLKI).

The protein belongs to the PRKRA family. Homodimer. Interacts with dicer1 and eif2ak2/pkr. Also able to interact with dsRNA. Associates with ribosomes. As to expression, expressed in brain, heart, kidney, liver, nerve and spleen.

The protein localises to the cytoplasm. Its subcellular location is the perinuclear region. It localises to the nucleus. The protein resides in the nucleolus. In terms of biological role, activates eif2ak2/pkr in the absence of double-stranded RNA (dsRNA), leading to phosphorylation of eif2s1/efi2-alpha and inhibition of translation and induction of apoptosis. Required for siRNA production by dicer1 and for subsequent siRNA-mediated post-transcriptional gene silencing. Does not seem to be required for processing of pre-miRNA to miRNA by dicer1. This chain is Interferon-inducible double-stranded RNA-dependent protein kinase activator A homolog B (prkra-b), found in Xenopus laevis (African clawed frog).